Reading from the N-terminus, the 208-residue chain is Ras-related protein M-Ras (208 aa).

Residues Asp-21, Gly-22, Gly-23, Val-24, Gly-25, Lys-26, Ser-27, Ala-28, Phe-38, Val-39, Pro-40, Tyr-42, Pro-44, and Thr-45 each coordinate GTP. Ser-27 provides a ligand contact to Mg(2+). Positions 42–50 (YDPTIEDSY) match the Effector region motif. 2 residues coordinate Mg(2+): Thr-45 and Asp-67. 7 residues coordinate GTP: Gly-70, Asn-126, Lys-127, Asp-129, Ser-156, Ala-157, and Lys-158. The residue at position 205 (Cys-205) is a Cysteine methyl ester. Cys-205 is lipidated: S-geranylgeranyl cysteine. The propeptide at 206–208 (VIL) is removed in mature form.

The protein belongs to the small GTPase superfamily. Ras family. Component of the SHOC2-MRAS-PP1c (SMP) holophosphatase complex consisting of SHOC2, GTP-bound M-Ras/MRAS and the catalytic subunit of protein phosphatase 1 (either PPP1CA, PPP1CB or PPP1CC). Interacts (active GTP-bound form) with both SHOC2 and PP1c (all isoforms) to form a tertiary complex; SHOC2 and PP1c preferably bind M-Ras/MRAS, but they also bind K-Ras/KRAS, N-Ras/NRAS and H-Ras/HRAS. Interacts with RGL3. Interacts (active GTP-bound form preferentially) with RGS14. It depends on Mg(2+) as a cofactor. Expressed in skeletal muscle cells.

It is found in the cell membrane. The catalysed reaction is GTP + H2O = GDP + phosphate + H(+). Its function is as follows. Signal transducer in the Ras-MAPK signaling pathway that regulates cell proliferation and survival. Core component of the SHOC2-MRAS-PP1c (SMP) holophosphatase complex that regulates the MAPK pathway activation. The formation of the SMP complex only occurs when MRAS is GTP-bound. MRAS has low intrinsic GTPase activity and may require additional factors for activation. The SMP complex specifically dephosphorylates the inhibitory phosphorylation at 'Ser-259' of RAF1 kinase, 'Ser-365' of BRAF kinase and 'Ser-214' of ARAF kinase, stimulating their kinase activities. The chain is Ras-related protein M-Ras (Mras) from Rattus norvegicus (Rat).